The following is a 428-amino-acid chain: Zinc metalloproteinase nas-27 (428 aa).

The first 17 residues, 1-17 (MQILPIFFPLLITSLHA), serve as a signal peptide directing secretion. Positions 18-57 (IPRGRRAVRNRNEGDINSLVGVGQYLYQGDIAVVKSRARR) are excised as a propeptide. One can recognise a Peptidase M12A domain in the interval 58 to 255 (AVIRQKHKKW…SRMNVLYNCH (198 aa)). Cystine bridges form between cysteine 99/cysteine 254, cysteine 120/cysteine 141, cysteine 258/cysteine 276, cysteine 281/cysteine 290, cysteine 306/cysteine 339, and cysteine 366/cysteine 386. Histidine 150 contributes to the Zn(2+) binding site. Residue glutamate 151 is part of the active site. Residues histidine 154 and histidine 160 each contribute to the Zn(2+) site. N-linked (GlcNAc...) asparagine glycosylation occurs at asparagine 181. The region spanning 250 to 291 (VLYNCHERCANTLNRCQQGGYPAPSDCSQCVCPDGFGGNFCE) is the EGF-like domain. In terms of domain architecture, CUB spans 306-428 (CGGVLWASET…LDFNIEYRAV (123 aa)). Residue asparagine 377 is glycosylated (N-linked (GlcNAc...) asparagine).

It depends on Zn(2+) as a cofactor.

It localises to the secreted. In terms of biological role, metalloprotease. In Caenorhabditis elegans, this protein is Zinc metalloproteinase nas-27 (nas-27).